Reading from the N-terminus, the 168-residue chain is G/U mismatch-specific DNA glycosylase (168 aa).

This sequence belongs to the uracil-DNA glycosylase (UDG) superfamily. TDG/mug family. Binds DNA as a monomer.

The protein resides in the cytoplasm. It carries out the reaction Specifically hydrolyzes mismatched double-stranded DNA and polynucleotides, releasing free uracil.. Functionally, excises ethenocytosine and uracil, which can arise by alkylation or deamination of cytosine, respectively, from the corresponding mispairs with guanine in ds-DNA. It is capable of hydrolyzing the carbon-nitrogen bond between the sugar-phosphate backbone of the DNA and the mispaired base. The complementary strand guanine functions in substrate recognition. Required for DNA damage lesion repair in stationary-phase cells. The chain is G/U mismatch-specific DNA glycosylase from Shigella dysenteriae serotype 1 (strain Sd197).